A 568-amino-acid polypeptide reads, in one-letter code: Sphingosine-1-phosphate lyase 1 (568 aa).

The Lumenal portion of the chain corresponds to 1-40 (MPGTDLLKLKDFEPYLEILESYSTKAKNYVNGYCTKYEPW). The chain crosses the membrane as a helical; Signal-anchor for type III membrane protein span at residues 41 to 61 (QLIAWSVLCTLLIVWVYELIF). Topologically, residues 62–568 (QPESLWSRFK…NQMNGSPKPR (507 aa)) are cytoplasmic. An N6-(pyridoxal phosphate)lysine; alternate modification is found at Lys353. Lys353 is subject to N6-acetyllysine; alternate. 3'-nitrotyrosine occurs at positions 356 and 366. Ser564 is subject to Phosphoserine.

The protein belongs to the group II decarboxylase family. Sphingosine-1-phosphate lyase subfamily. Pyridoxal 5'-phosphate is required as a cofactor. Highest levels are found in liver, small intestine and thymus, followed by kidney, lung, heart, spleen and brain (at protein level). Also detected in stomach, testis and skeletal muscle (at protein level).

It localises to the endoplasmic reticulum membrane. The enzyme catalyses sphinganine 1-phosphate = hexadecanal + phosphoethanolamine. It catalyses the reaction sphing-4-enine 1-phosphate = (2E)-hexadecenal + phosphoethanolamine. The protein operates within lipid metabolism; sphingolipid metabolism. Functionally, cleaves phosphorylated sphingoid bases (PSBs), such as sphingosine-1-phosphate, into fatty aldehydes and phosphoethanolamine. Elevates stress-induced ceramide production and apoptosis. Required for global lipid homeostasis in liver and cholesterol homeostasis in fibroblasts. Involved in the regulation of pro-inflammatory response and neutrophil trafficking. Modulates neuronal autophagy via phosphoethanolamine production which regulates accumulation of aggregate-prone proteins such as APP. Seems to play a role in establishing neuronal contact sites and axonal maintenance. This chain is Sphingosine-1-phosphate lyase 1, found in Mus musculus (Mouse).